Reading from the N-terminus, the 235-residue chain is Large ribosomal subunit protein uL1 (235 aa).

This sequence belongs to the universal ribosomal protein uL1 family. As to quaternary structure, part of the 50S ribosomal subunit.

In terms of biological role, binds directly to 23S rRNA. The L1 stalk is quite mobile in the ribosome, and is involved in E site tRNA release. Its function is as follows. Protein L1 is also a translational repressor protein, it controls the translation of the L11 operon by binding to its mRNA. The protein is Large ribosomal subunit protein uL1 of Micrococcus luteus (strain ATCC 4698 / DSM 20030 / JCM 1464 / CCM 169 / CCUG 5858 / IAM 1056 / NBRC 3333 / NCIMB 9278 / NCTC 2665 / VKM Ac-2230) (Micrococcus lysodeikticus).